Reading from the N-terminus, the 631-residue chain is KIF-binding protein (631 aa).

Residues 60–70 (EQGEAGDEADC) show a composition bias toward acidic residues. The segment at 60-88 (EQGEAGDEADCESSQTADGEPEDGFEKTF) is disordered.

The protein belongs to the KIF-binding protein family. In terms of tissue distribution, at 30 hpf, primarily expressed in central and peripheral neurons.

The protein localises to the cytoplasm. Its subcellular location is the cytoskeleton. Activator of KIF1B plus-end-directed microtubule motor activity. Required for organization of axonal microtubules, and axonal outgrowth and maintenance during peripheral and central nervous system development. The chain is KIF-binding protein (kifbp) from Danio rerio (Zebrafish).